A 527-amino-acid polypeptide reads, in one-letter code: Glutamate--cysteine ligase (527 aa).

It belongs to the glutamate--cysteine ligase type 1 family. Type 1 subfamily.

The enzyme catalyses L-cysteine + L-glutamate + ATP = gamma-L-glutamyl-L-cysteine + ADP + phosphate + H(+). Its pathway is sulfur metabolism; glutathione biosynthesis; glutathione from L-cysteine and L-glutamate: step 1/2. In Pseudomonas aeruginosa (strain LESB58), this protein is Glutamate--cysteine ligase.